Reading from the N-terminus, the 149-residue chain is Large ribosomal subunit protein bL9 (149 aa).

It belongs to the bacterial ribosomal protein bL9 family.

Functionally, binds to the 23S rRNA. In Glaesserella parasuis serovar 5 (strain SH0165) (Haemophilus parasuis), this protein is Large ribosomal subunit protein bL9.